The sequence spans 209 residues: Probable peptide export ATP-binding protein YydI (209 aa).

An ABC transporter domain is found at 1–207; sequence MNIANYTLKV…SVDKLIEVYI (207 aa). Position 33–40 (33–40) interacts with ATP; it reads GKNGVGKS.

Belongs to the ABC transporter superfamily. In terms of assembly, the complex is composed of two ATP-binding proteins (YydI), two transmembrane proteins (YydJ).

Its function is as follows. Suggested to be part of an ABC transporter complex YydIJ involved in export of the modified peptide YydF. Responsible for energy coupling to the transport system. The protein is Probable peptide export ATP-binding protein YydI (yydI) of Bacillus subtilis (strain 168).